We begin with the raw amino-acid sequence, 461 residues long: Probable lipid II flippase MurJ (461 aa).

A run of 12 helical transmembrane segments spans residues 5–25, 51–71, 96–116, 123–143, 156–176, 229–249, 258–278, 293–313, 337–357, 372–392, 402–422, and 429–449; these read ILGA…PNLF, FASL…LLVA, IVAI…LGAL, FFAS…ALLI, LSYG…YPLV, IASF…VSYL, LPLA…IAIA, KAWF…IMLS, VFSL…FSLW, LISL…LGVL, GLFL…LGII, and LVIL…KSWV.

This sequence belongs to the MurJ/MviN family.

The protein localises to the cell inner membrane. Its pathway is cell wall biogenesis; peptidoglycan biosynthesis. Functionally, involved in peptidoglycan biosynthesis. Transports lipid-linked peptidoglycan precursors from the inner to the outer leaflet of the cytoplasmic membrane. This is Probable lipid II flippase MurJ from Helicobacter pylori (strain ATCC 700392 / 26695) (Campylobacter pylori).